We begin with the raw amino-acid sequence, 930 residues long: G patch domain-containing protein TGH (930 aa).

A Glycyl lysine isopeptide (Lys-Gly) (interchain with G-Cter in ubiquitin) cross-link involves residue Lys-25. The interval 76-152 (GWAPQSFTSS…PSAIPGPVPD (77 aa)) is disordered. Residues 159–199 (SESIGVKLLLKMGWRRGHSIKEVRASSDARREARKAFLAFY) enclose the G-patch domain. The SURP motif repeat unit spans residues 405–447 (LIEGFATFVSRCGKLYEDLSREKNQSNQLFDFLREGNGHDYYA). 3 disordered regions span residues 478–508 (AETRGSLLGEKPLQRSLKETDTSASSGGSFQ), 687–751 (RQVS…NEAA), and 773–930 (FEVP…RRRD). Residues 489 to 498 (PLQRSLKETD) are compositionally biased toward basic and acidic residues. The segment covering 499–508 (TSASSGGSFQ) has biased composition (polar residues). A compositionally biased stretch (acidic residues) spans 701–711 (IEEPEVEVEVE). Over residues 779-808 (EEIKSRSKPEDSSDKRLDRPGLKEKVEEKT) the composition is skewed to basic and acidic residues. Positions 848-857 (RRKRYNKKDR) are enriched in basic residues. The segment covering 858 to 877 (HRNDSESDSSSDYHSRDKQG) has biased composition (basic and acidic residues). Positions 892 to 908 (RSSHKKHSKHRRTKKSS) are enriched in basic residues. The span at 913-923 (SSDEEQKESRR) shows a compositional bias: basic and acidic residues.

Expressed in vasculature of cotyledons and leaves, young meristematic tissues, trichomes and pistils.

The protein localises to the nucleus speckle. Its subcellular location is the nucleus. It localises to the nucleoplasm. Functionally, functions as a component of microRNA (miRNA) and small interfering RNA (siRNA) biogenesis. May assist DCL1 and DCL4 to efficiently process and/or recruit the precursors of miRNAs and siRNAs. In the miRNA biogenesis pathway, associates with the DCL1 complex that processes primary miRNAs (pri-miRNAs) into miRNAs. Binds pri-miRNAs and precursor miRNAs (pre-miRNAs). Is required for the interaction between pri-miRNAs and DRB1. Required for general proper plant growth and, in particular, initiation of vascular development. Interacts genetically with AMP1, a glutamate carboxypeptidase involved in the regulation of meristem function. This is G patch domain-containing protein TGH from Arabidopsis thaliana (Mouse-ear cress).